The sequence spans 421 residues: Voltage-dependent calcium channel gamma-8 subunit (421 aa).

4 consecutive transmembrane segments (helical) span residues V19–I39, S127–A147, I157–I177, and F207–I227. Phosphoserine is present on residues S251 and S254. The tract at residues R271 to I304 is disordered. The span at S276–R287 shows a compositional bias: low complexity. Residues V318 to G338 form a helical membrane-spanning segment. 2 disordered regions span residues G342–T363 and V378–V421. Pro residues predominate over residues P384–P397. The segment covering A408–V421 has biased composition (polar residues).

It belongs to the PMP-22/EMP/MP20 family. CACNG subfamily. As to quaternary structure, interacts with CACNA1C. Identified in a complex with the L-type calcium channel subunits CACNA1C, CACNA2D1 and either CACNB1 or CACNB2. Acts as an auxiliary subunit for AMPA-selective glutamate receptors (AMPARs). Found in a complex with GRIA1, GRIA2, GRIA3, GRIA4, CNIH2, CNIH3, CACNG2, CACNG3, CACNG4, CACNG5 and CACNG7. Interacts with CNIH2. Found in a complex with GRIA1, GRIA2, GRIA3, GRIA4, DLG4 and CNIH2. Palmitoylated. Probably palmitoylated by ZDHHC3 and ZDHHC7.

The protein localises to the cell membrane. It localises to the postsynaptic density membrane. Its function is as follows. Regulates the activity of L-type calcium channels that contain CACNA1C as pore-forming subunit. Regulates the trafficking and gating properties of AMPA-selective glutamate receptors (AMPARs). Promotes their targeting to the cell membrane and synapses and modulates their gating properties by slowing their rates of activation, deactivation and desensitization and by mediating their resensitization. Does not show subunit-specific AMPA receptor regulation and regulates all AMPAR subunits. Thought to stabilize the calcium channel in an inactivated (closed) state. This chain is Voltage-dependent calcium channel gamma-8 subunit, found in Rattus norvegicus (Rat).